Consider the following 38-residue polypeptide: Photosystem II reaction center protein L (38 aa).

The helical transmembrane segment at 17–37 threads the bilayer; that stretch reads SLYWGLLLIFVLAVLFSNYFF.

Belongs to the PsbL family. PSII is composed of 1 copy each of membrane proteins PsbA, PsbB, PsbC, PsbD, PsbE, PsbF, PsbH, PsbI, PsbJ, PsbK, PsbL, PsbM, PsbT, PsbX, PsbY, PsbZ, Psb30/Ycf12, at least 3 peripheral proteins of the oxygen-evolving complex and a large number of cofactors. It forms dimeric complexes.

It localises to the plastid. Its subcellular location is the chloroplast thylakoid membrane. In terms of biological role, one of the components of the core complex of photosystem II (PSII). PSII is a light-driven water:plastoquinone oxidoreductase that uses light energy to abstract electrons from H(2)O, generating O(2) and a proton gradient subsequently used for ATP formation. It consists of a core antenna complex that captures photons, and an electron transfer chain that converts photonic excitation into a charge separation. This subunit is found at the monomer-monomer interface and is required for correct PSII assembly and/or dimerization. In Adiantum capillus-veneris (Maidenhair fern), this protein is Photosystem II reaction center protein L.